Here is a 578-residue protein sequence, read N- to C-terminus: Malonate--CoA ligase ACSF3, mitochondrial (578 aa).

The N-terminal 19 residues, 1–19, are a transit peptide targeting the mitochondrion; the sequence is MRVGAFLGRSLFSCSHVRG. 205 to 213 is a binding site for ATP; it reads TSGTTGRPK. Residues 394 to 413 are disordered; that stretch reads QNPRKEGTSYTTHAQGDSTG. ATP-binding residues include Asp459, Arg473, and Lys565.

It belongs to the ATP-dependent AMP-binding enzyme family.

Its subcellular location is the mitochondrion. The catalysed reaction is tetracosanoate + ATP + CoA = tetracosanoyl-CoA + AMP + diphosphate. The enzyme catalyses malonate + ATP + CoA = malonyl-CoA + AMP + diphosphate. In terms of biological role, catalyzes the initial reaction in intramitochondrial fatty acid synthesis, by activating malonate and methylmalonate, but not acetate, into their respective CoA thioester. May have some preference toward very-long-chain substrates. The protein is Malonate--CoA ligase ACSF3, mitochondrial of Xenopus laevis (African clawed frog).